The primary structure comprises 206 residues: Two-component response regulator ORR7 (206 aa).

The segment at 53–92 (VVPLHDNASAEDDDDDEEDDDEDDDDDDDEDDEEEAAPPY) is disordered. Residues 61–88 (SAEDDDDDEEDDDEDDDDDDDEDDEEEA) are compositionally biased toward acidic residues. The Response regulatory domain occupies 92-205 (YVMAVDDSSV…DISRITSRML (114 aa)). Residue Asp-138 is modified to 4-aspartylphosphate.

Belongs to the ARR family. Type-A subfamily. Post-translationally, two-component system major event consists of a His-to-Asp phosphorelay between a sensor histidine kinase (HK) and a response regulator (RR). In plants, the His-to-Asp phosphorelay involves an additional intermediate named Histidine-containing phosphotransfer protein (HPt). This multistep phosphorelay consists of a His-Asp-His-Asp sequential transfer of a phosphate group between first a His and an Asp of the HK protein, followed by the transfer to a conserved His of the HPt protein and finally the transfer to an Asp in the receiver domain of the RR protein. In terms of tissue distribution, expressed in flowers, and at low levels in roots, mature leaves and shoots.

Functions as a response regulator involved in His-to-Asp phosphorelay signal transduction system. Phosphorylation of the Asp residue in the receiver domain activates the ability of the protein to promote the transcription of target genes. Type-A response regulators seem to act as negative regulators of the cytokinin signaling. The protein is Two-component response regulator ORR7 of Oryza sativa subsp. indica (Rice).